A 302-amino-acid chain; its full sequence is Heme A synthase (302 aa).

Over 1–8 (MFSKKNLK) the chain is Cytoplasmic. Residues 9 to 29 (WLSVLATVIMAFVQLGGALVT) traverse the membrane as a helical segment. The Extracellular segment spans residues 30–67 (KTGSADGCGSDWPLCHGAFLPQNLPIQTLIELSHRAVS). Cys37 and Cys44 are joined by a disulfide. Residue Glu60 is part of the active site. Residue His63 coordinates heme o. The chain crosses the membrane as a helical span at residues 68 to 88 (GLSLIVVLWLVIVAWKHIGYI). At 89 to 93 (KEVKP) the chain is on the cytoplasmic side. The helical transmembrane segment at 94 to 114 (LSCISVGFLLIQALVGAAAVM) threads the bilayer. Over 115–122 (WQQNAYVL) the chain is Extracellular. Residues 123–143 (ALHFGISLISFSSVFVLTLII) traverse the membrane as a helical segment. Heme o is bound at residue His125. At 144-161 (YEVDRKYEADELFIRKPL) the chain is on the cytoplasmic side. Residues 162-182 (RIYTWIMALIVYMTIYTGALV) traverse the membrane as a helical segment. Over 183–215 (RHKEASLAYGQWPLPFNDLMPHNVQDWVNLTHR) the chain is Extracellular. His214 lines the heme b pocket. A helical transmembrane segment spans residues 216–236 (GMALIAFIWILITFIHAVNNY). Residues 237–244 (RENRTIRY) are Cytoplasmic-facing. The chain crosses the membrane as a helical span at residues 245 to 265 (GYTAAFILVILQVTTGALSII). The Extracellular portion of the chain corresponds to 266–271 (TEVNLF). Residues 272–292 (IALLHALFITLLFGLIAYFII) form a helical membrane-spanning segment. His276 serves as a coordination point for heme b. Topologically, residues 293 to 302 (LMLRTIRSGG) are cytoplasmic.

Belongs to the COX15/CtaA family. Type 1 subfamily. In terms of assembly, interacts with CtaB. Heme b serves as cofactor.

It localises to the cell membrane. The catalysed reaction is Fe(II)-heme o + 2 A + H2O = Fe(II)-heme a + 2 AH2. The protein operates within porphyrin-containing compound metabolism; heme A biosynthesis; heme A from heme O: step 1/1. Functionally, catalyzes the conversion of heme O to heme A by two successive hydroxylations of the methyl group at C8. The first hydroxylation forms heme I, the second hydroxylation results in an unstable dihydroxymethyl group, which spontaneously dehydrates, resulting in the formyl group of heme A. In Staphylococcus saprophyticus subsp. saprophyticus (strain ATCC 15305 / DSM 20229 / NCIMB 8711 / NCTC 7292 / S-41), this protein is Heme A synthase.